Consider the following 338-residue polypeptide: DNA-directed RNA polymerase I subunit RPA43 (338 aa).

The segment at 209–338 (EVSEEVTENG…PKRKGKSNFL (130 aa)) is disordered. 3 positions are modified to phosphoserine: Ser242, Ser304, and Ser316. Thr322 is modified (phosphothreonine). Ser328 is subject to Phosphoserine. Positions 328-338 (SPKRKGKSNFL) are enriched in basic residues.

Belongs to the eukaryotic RPA43 RNA polymerase subunit family. In terms of assembly, component of the RNA polymerase I (Pol I) complex consisting of 13 subunits: a ten-subunit catalytic core composed of POLR1A/RPA1, POLR1B/RPA2, POLR1C/RPAC1, POLR1D/RPAC2, POLR1H/RPA12, POLR2E/RPABC1, POLR2F/RPABC2, POLR2H/RPABC3, POLR2K/RPABC4 and POLR2L/RPABC5; a mobile stalk subunit POLR1F/RPA43 protruding from the core and additional subunits homologous to general transcription factors POLR1E/RPA49 and POLR1G/RPA34. Interacts with RRN3/TIF-IA. As to expression, widely expressed. Expressed in all fetal and adult tissues tested, with highest expression in fetal lung, liver, and kidney, and low expression in all adult tissues.

The protein resides in the nucleus. The protein localises to the nucleolus. Functionally, component of RNA polymerase I (Pol I), a DNA-dependent RNA polymerase which synthesizes ribosomal RNA precursors using the four ribonucleoside triphosphates as substrates. Through its association with RRN3/TIF-IA may be involved in recruitment of Pol I to rDNA promoters. This chain is DNA-directed RNA polymerase I subunit RPA43, found in Homo sapiens (Human).